Here is a 473-residue protein sequence, read N- to C-terminus: Ribulose bisphosphate carboxylase large chain (473 aa).

Positions 116 and 166 each coordinate substrate. Catalysis depends on K168, which acts as the Proton acceptor. K170 contributes to the substrate binding site. K194, D196, and E197 together coordinate Mg(2+). An N6-carboxylysine modification is found at K194. Residue H287 is the Proton acceptor of the active site. R288, H320, and S372 together coordinate substrate.

Belongs to the RuBisCO large chain family. Type I subfamily. Heterohexadecamer of 8 large chains and 8 small chains. The cofactor is Mg(2+).

It catalyses the reaction 2 (2R)-3-phosphoglycerate + 2 H(+) = D-ribulose 1,5-bisphosphate + CO2 + H2O. It carries out the reaction D-ribulose 1,5-bisphosphate + O2 = 2-phosphoglycolate + (2R)-3-phosphoglycerate + 2 H(+). Its function is as follows. RuBisCO catalyzes two reactions: the carboxylation of D-ribulose 1,5-bisphosphate, the primary event in carbon dioxide fixation, as well as the oxidative fragmentation of the pentose substrate. Both reactions occur simultaneously and in competition at the same active site. The polypeptide is Ribulose bisphosphate carboxylase large chain (Halorhodospira halophila (strain DSM 244 / SL1) (Ectothiorhodospira halophila (strain DSM 244 / SL1))).